A 193-amino-acid polypeptide reads, in one-letter code: Ferredoxin-2, mitochondrial (193 aa).

Residues 38 to 70 (QATPEKLETSNEEEGSSSAQITAGVESDAENQR) form a disordered region. The 2Fe-2S ferredoxin-type domain occupies 78 to 180 (VEVVFLDRSG…GAEFTLPKIT (103 aa)). Residues Cys-115, Cys-121, Cys-124, and Cys-161 each coordinate [2Fe-2S] cluster.

The protein belongs to the adrenodoxin/putidaredoxin family. As to quaternary structure, component of the mitochondrial core iron-sulfur cluster (ISC) complex composed of NFS1, LYRM4, NDUFAB1, ISCU, FXN, and FDX2; this complex is a heterohexamer containing two copies of each monomer. The cofactor is [2Fe-2S] cluster.

The protein resides in the mitochondrion. It localises to the mitochondrion matrix. Its function is as follows. Electron donor, of the core iron-sulfur cluster (ISC) assembly complex, that acts to reduce the persulfide into sulfide during [2Fe-2S] clusters assembly on the scaffolding protein ISCU. The core iron-sulfur cluster (ISC) assembly complex is involved in the de novo synthesis of a [2Fe-2S] cluster, the first step of the mitochondrial iron-sulfur protein biogenesis. This process is initiated by the cysteine desulfurase complex (NFS1:LYRM4:NDUFAB1) that produces persulfide which is delivered on the scaffold protein ISCU in a FXN-dependent manner. Then this complex is stabilized by FDX2 which provides reducing equivalents to accomplish the [2Fe-2S] cluster assembly. Finally, the [2Fe-2S] cluster is transferred from ISCU to chaperone proteins, including HSCB, HSPA9 and GLRX5. Essential for coenzyme Q biosynthesis: together with FDXR, transfers the electrons required for the hydroxylation reaction performed by COQ6. In Xenopus laevis (African clawed frog), this protein is Ferredoxin-2, mitochondrial.